The chain runs to 640 residues: Translation factor GUF1, mitochondrial (640 aa).

The transit peptide at 1–26 directs the protein to the mitochondrion; that stretch reads MRRLRSLYLQSSICFRRFNHYSAKDT. The region spanning 39–223 is the tr-type G domain; the sequence is ENYRNFSIVA…AIIDRIPPPT (185 aa). Residues 48–55, 115–119, and 169–172 contribute to the GTP site; these read AHVDHGKS, DTPGH, and NKID.

The protein belongs to the TRAFAC class translation factor GTPase superfamily. Classic translation factor GTPase family. LepA subfamily.

The protein localises to the mitochondrion inner membrane. The enzyme catalyses GTP + H2O = GDP + phosphate + H(+). Functionally, promotes mitochondrial protein synthesis. May act as a fidelity factor of the translation reaction, by catalyzing a one-codon backward translocation of tRNAs on improperly translocated ribosomes. Binds to mitochondrial ribosomes in a GTP-dependent manner. The protein is Translation factor GUF1, mitochondrial of Lachancea thermotolerans (strain ATCC 56472 / CBS 6340 / NRRL Y-8284) (Yeast).